The primary structure comprises 396 residues: L-lactate dehydrogenase (396 aa).

In terms of domain architecture, FMN hydroxy acid dehydrogenase spans 1–380 (MIISAASDYR…SQDSLVQELD (380 aa)). Residue Tyr24 participates in substrate binding. Ser106 and Gln127 together coordinate FMN. Tyr129 is a binding site for substrate. Thr155 contributes to the FMN binding site. Arg164 provides a ligand contact to substrate. Lys251 contacts FMN. His275 serves as the catalytic Proton acceptor. Arg278 contributes to the substrate binding site. 306-330 (DSGIRNGLDVVRMIALGADTVLLGR) provides a ligand contact to FMN.

It belongs to the FMN-dependent alpha-hydroxy acid dehydrogenase family. FMN is required as a cofactor.

It is found in the cell inner membrane. It catalyses the reaction (S)-lactate + A = pyruvate + AH2. Functionally, catalyzes the conversion of L-lactate to pyruvate. Is coupled to the respiratory chain. This is L-lactate dehydrogenase from Escherichia fergusonii (strain ATCC 35469 / DSM 13698 / CCUG 18766 / IAM 14443 / JCM 21226 / LMG 7866 / NBRC 102419 / NCTC 12128 / CDC 0568-73).